The sequence spans 78 residues: Defensin-like protein 74 (78 aa).

A signal peptide spans 1–28; sequence MNYKIGIMSLLVITSIIFLFLVPDKVEA. 4 disulfides stabilise this stretch: C32–C73, C36–C58, C42–C71, and C46–C72.

This sequence belongs to the DEFL family.

The protein localises to the secreted. The polypeptide is Defensin-like protein 74 (LCR43) (Arabidopsis thaliana (Mouse-ear cress)).